We begin with the raw amino-acid sequence, 829 residues long: Leucine--tRNA ligase (829 aa).

A 'HIGH' region motif is present at residues 40 to 51 (PYPSGAGLHVGH). The short motif at 609-613 (KMSKS) is the 'KMSKS' region element. Residue K612 participates in ATP binding.

This sequence belongs to the class-I aminoacyl-tRNA synthetase family.

The protein resides in the cytoplasm. It catalyses the reaction tRNA(Leu) + L-leucine + ATP = L-leucyl-tRNA(Leu) + AMP + diphosphate. In Lactococcus lactis subsp. lactis (strain IL1403) (Streptococcus lactis), this protein is Leucine--tRNA ligase.